Consider the following 41-residue polypeptide: Histone H3.2 (41 aa).

Residues 1-41 (MARTKQTARKSTGAKAPRKQLASKAARKSAPATGGIKKPHR) are disordered.

Belongs to the histone H3 family. The nucleosome is a histone octamer containing two molecules each of H2A, H2B, H3 and H4 assembled in one H3-H4 heterotetramer and two H2A-H2B heterodimers. The octamer wraps approximately 147 bp of DNA.

The protein localises to the nucleus. Its subcellular location is the chromosome. Functionally, core component of nucleosome. Nucleosomes wrap and compact DNA into chromatin, limiting DNA accessibility to the cellular machineries which require DNA as a template. Histones thereby play a central role in transcription regulation, DNA repair, DNA replication and chromosomal stability. DNA accessibility is regulated via a complex set of post-translational modifications of histones, also called histone code, and nucleosome remodeling. In Tetrahymena australis, this protein is Histone H3.2.